A 46-amino-acid polypeptide reads, in one-letter code: Photosystem II reaction center protein K (46 aa).

The propeptide occupies 1-9 (MSTLPILLA). A helical membrane pass occupies residues 25 to 45 (LPSIPVLFLLLAFVWQAAVSF).

This sequence belongs to the PsbK family. In terms of assembly, PSII is composed of 1 copy each of membrane proteins PsbA, PsbB, PsbC, PsbD, PsbE, PsbF, PsbH, PsbI, PsbJ, PsbK, PsbL, PsbM, PsbT, PsbX, PsbY, PsbZ, Psb30/Ycf12, at least 3 peripheral proteins of the oxygen-evolving complex and a large number of cofactors. It forms dimeric complexes.

The protein resides in the plastid. It is found in the chloroplast thylakoid membrane. Its function is as follows. One of the components of the core complex of photosystem II (PSII). PSII is a light-driven water:plastoquinone oxidoreductase that uses light energy to abstract electrons from H(2)O, generating O(2) and a proton gradient subsequently used for ATP formation. It consists of a core antenna complex that captures photons, and an electron transfer chain that converts photonic excitation into a charge separation. The protein is Photosystem II reaction center protein K of Nephroselmis olivacea (Green alga).